The primary structure comprises 445 residues: Phosphoglucosamine mutase (445 aa).

Ser-99 acts as the Phosphoserine intermediate in catalysis. Ser-99, Asp-242, Asp-244, and Asp-246 together coordinate Mg(2+). Ser-99 is subject to Phosphoserine.

This sequence belongs to the phosphohexose mutase family. It depends on Mg(2+) as a cofactor. Post-translationally, activated by phosphorylation.

It carries out the reaction alpha-D-glucosamine 1-phosphate = D-glucosamine 6-phosphate. In terms of biological role, catalyzes the conversion of glucosamine-6-phosphate to glucosamine-1-phosphate. This Helicobacter pylori (strain Shi470) protein is Phosphoglucosamine mutase.